Here is a 466-residue protein sequence, read N- to C-terminus: Ribulose bisphosphate carboxylase (466 aa).

A substrate-binding site is contributed by asparagine 111. The active-site Proton acceptor is the lysine 166. Position 168 (lysine 168) interacts with substrate. Positions 191, 193, and 194 each coordinate Mg(2+). Position 191 is an N6-carboxylysine (lysine 191). The Proton acceptor role is filled by histidine 287. Substrate contacts are provided by arginine 288, histidine 321, and serine 368.

It belongs to the RuBisCO large chain family. Type II subfamily. As to quaternary structure, homodimer. It depends on Mg(2+) as a cofactor.

The catalysed reaction is 2 (2R)-3-phosphoglycerate + 2 H(+) = D-ribulose 1,5-bisphosphate + CO2 + H2O. It carries out the reaction D-ribulose 1,5-bisphosphate + O2 = 2-phosphoglycolate + (2R)-3-phosphoglycerate + 2 H(+). In terms of biological role, ruBisCO catalyzes two reactions: the carboxylation of D-ribulose 1,5-bisphosphate, the primary event in carbon dioxide fixation, as well as the oxidative fragmentation of the pentose substrate. Both reactions occur simultaneously and in competition at the same active site. The chain is Ribulose bisphosphate carboxylase (cbbM) from Rhodospirillum rubrum.